Reading from the N-terminus, the 358-residue chain is 2'-5'-oligoadenylate synthase 1A (358 aa).

Residues 14-61 are interaction with dsRNA; it reads DKFIEVYLLPNTSFRDDVKSAINVLCDFLKERCFRDTVHPVRVSKVVK. Residue Ser64 participates in ATP binding. Positions 76, 78, and 149 each coordinate Mg(2+). The interval 201–211 is interaction with dsRNA; that stretch reads QRPTKLKSLIR. ATP contacts are provided by Arg211, Lys214, and Gln231.

This sequence belongs to the 2-5A synthase family. In terms of assembly, monomer. Homotetramer. Interacts with OAS1D. The cofactor is Mg(2+).

It localises to the cytoplasm. The protein resides in the mitochondrion. Its subcellular location is the nucleus. The protein localises to the microsome. It is found in the endoplasmic reticulum. The enzyme catalyses 3 ATP = 5'-triphosphoadenylyl-(2'-&gt;5')-adenylyl-(2'-&gt;5')-adenosine + 2 diphosphate. Its activity is regulated as follows. Produced as a latent enzyme which is activated by dsRNA generated during the course of viral infection. The dsRNA activator must be at least 15 nucleotides long, and no modification of the 2'-hydroxyl group is tolerated. ssRNA or dsDNA do not act as activators. Its function is as follows. Interferon-induced, dsRNA-activated antiviral enzyme which plays a critical role in cellular innate antiviral response. In addition, it may also play a role in other cellular processes such as apoptosis, cell growth, differentiation and gene regulation. Synthesizes higher oligomers of 2'-5'-oligoadenylates (2-5A) from ATP which then bind to the inactive monomeric form of ribonuclease L (RNase L) leading to its dimerization and subsequent activation. Activation of RNase L leads to degradation of cellular as well as viral RNA, resulting in the inhibition of protein synthesis, thus terminating viral replication. Can mediate the antiviral effect via the classical RNase L-dependent pathway or an alternative antiviral pathway independent of RNase L. The sequence is that of 2'-5'-oligoadenylate synthase 1A (Oas1a) from Rattus norvegicus (Rat).